Here is a 166-residue protein sequence, read N- to C-terminus: Large ribosomal subunit protein bL9 (166 aa).

It belongs to the bacterial ribosomal protein bL9 family.

Binds to the 23S rRNA. This chain is Large ribosomal subunit protein bL9, found in Brachyspira hyodysenteriae (strain ATCC 49526 / WA1).